A 191-amino-acid chain; its full sequence is Fe/S biogenesis protein NfuA (191 aa).

[4Fe-4S] cluster is bound by residues Cys-149 and Cys-152.

Belongs to the NfuA family. Homodimer. It depends on [4Fe-4S] cluster as a cofactor.

Involved in iron-sulfur cluster biogenesis. Binds a 4Fe-4S cluster, can transfer this cluster to apoproteins, and thereby intervenes in the maturation of Fe/S proteins. Could also act as a scaffold/chaperone for damaged Fe/S proteins. The sequence is that of Fe/S biogenesis protein NfuA from Photorhabdus laumondii subsp. laumondii (strain DSM 15139 / CIP 105565 / TT01) (Photorhabdus luminescens subsp. laumondii).